Reading from the N-terminus, the 213-residue chain is Protein GET1 (213 aa).

Residues 1-4 (MPSL) are Lumenal-facing. A helical membrane pass occupies residues 5 to 24 (LLVVFILQFLLHIINTVGAS). Topologically, residues 25-110 (TVNDLLWILY…AFTSAVSTLR (86 aa)) are cytoplasmic. Positions 41–68 (TSSSAQKAQKLKKEIVQLKRELGATSAQ) form a coiled coil. The helical transmembrane segment at 111 to 131 (WLGTQGLRFVLQFWFAKSPMF) threads the bilayer. The Lumenal portion of the chain corresponds to 132–155 (WMPAGWLPFYVEWILSFPRAPLGS). A helical transmembrane segment spans residues 156–172 (VSINVWGIACASMIALA). The Cytoplasmic portion of the chain corresponds to 173 to 213 (AEGLAAVWVLATKRPTPIATEKKEAMAFAADQKSSGEKKEL).

This sequence belongs to the WRB/GET1 family. In terms of assembly, interacts with GET3.

The protein localises to the endoplasmic reticulum membrane. In terms of biological role, required for the post-translational delivery of tail-anchored (TA) proteins to the endoplasmic reticulum. Acts as a membrane receptor for soluble GET3, which recognizes and selectively binds the transmembrane domain of TA proteins in the cytosol. In Phaeosphaeria nodorum (strain SN15 / ATCC MYA-4574 / FGSC 10173) (Glume blotch fungus), this protein is Protein GET1.